The chain runs to 252 residues: MAQRKMIVFPTKNELSEAMAEYTANLSAKFIKEKGLFTVVLSGGDLIDWLCKLVQPPYIDSIEWPKWHVFWVDERVCAWEDPDSNYKLAMEGFLSKVPIPDKNIYAIDKHLAADGNAEHCATLYEECLKNLVKEKIIPISKKTGYPEFDLQLLGMGPDGHMASLFPNHPQINEKQKWVTYITDSPKPPPKRITFTLPVINSTLYNLMAICDKAPAKSVAEIMKHNNLSLPSAHLSAQVENVWYLDQAAASEL.

The protein belongs to the glucosamine/galactosamine-6-phosphate isomerase family. 6-phosphogluconolactonase subfamily.

Its subcellular location is the cytoplasm. The protein localises to the cytosol. The catalysed reaction is 6-phospho-D-glucono-1,5-lactone + H2O = 6-phospho-D-gluconate + H(+). Its pathway is carbohydrate degradation; pentose phosphate pathway; D-ribulose 5-phosphate from D-glucose 6-phosphate (oxidative stage): step 2/3. Functionally, catalyzes the hydrolysis of 6-phosphogluconolactone to 6-phosphogluconate. The sequence is that of Probable 6-phosphogluconolactonase 5 from Arabidopsis thaliana (Mouse-ear cress).